Here is a 969-residue protein sequence, read N- to C-terminus: RNA polymerase-associated protein RapA (969 aa).

The Helicase ATP-binding domain occupies 164-334 (EVGRRHAPRV…FARLRLLDAD (171 aa)). Residue 177-184 (DEVGLGKT) participates in ATP binding. Positions 280–283 (DEAH) match the DEAH box motif. A Helicase C-terminal domain is found at 492–646 (RVNWLLEKVK…TCPTGRAVYD (155 aa)).

The protein belongs to the SNF2/RAD54 helicase family. RapA subfamily. In terms of assembly, interacts with the RNAP. Has a higher affinity for the core RNAP than for the holoenzyme. Its ATPase activity is stimulated by binding to RNAP.

In terms of biological role, transcription regulator that activates transcription by stimulating RNA polymerase (RNAP) recycling in case of stress conditions such as supercoiled DNA or high salt concentrations. Probably acts by releasing the RNAP, when it is trapped or immobilized on tightly supercoiled DNA. Does not activate transcription on linear DNA. Probably not involved in DNA repair. The sequence is that of RNA polymerase-associated protein RapA from Vibrio cholerae serotype O1 (strain ATCC 39315 / El Tor Inaba N16961).